Here is a 186-residue protein sequence, read N- to C-terminus: Orotate phosphoribosyltransferase (186 aa).

5-phospho-alpha-D-ribose 1-diphosphate-binding positions include Arg-93, Lys-94, Lys-97, His-99, and Glu-119–Ser-127. Orotate is bound by residues Thr-123 and Arg-151.

It belongs to the purine/pyrimidine phosphoribosyltransferase family. PyrE subfamily. Homodimer. Mg(2+) serves as cofactor.

It carries out the reaction orotidine 5'-phosphate + diphosphate = orotate + 5-phospho-alpha-D-ribose 1-diphosphate. It functions in the pathway pyrimidine metabolism; UMP biosynthesis via de novo pathway; UMP from orotate: step 1/2. Functionally, catalyzes the transfer of a ribosyl phosphate group from 5-phosphoribose 1-diphosphate to orotate, leading to the formation of orotidine monophosphate (OMP). This Pyrococcus horikoshii (strain ATCC 700860 / DSM 12428 / JCM 9974 / NBRC 100139 / OT-3) protein is Orotate phosphoribosyltransferase.